The chain runs to 185 residues: MNHILLIILIFAALALIFGLLLGFAAIHFKVESDPIVDQLDALLPQTQCGQCGYPGCRPYAEAIANGDSINKCVPGGAQTIQNIADLMGVEPPSDDNELLMAPPKRVAFIHENLCIGCTKCIQACPVDAIIGAPKLMHTILRSECTGCDLCVDPCPTNCIEMIELPATPDRWKWDVETIPVRMVQ.

A hydrophobic region spans residues 1 to 26 (MNHILLIILIFAALALIFGLLLGFAA). Residues 32-90 (ESDPIVDQLDALLPQTQCGQCGYPGCRPYAEAIANGDSINKCVPGGAQTIQNIADLMGV) enclose the 4Fe-4S domain. [4Fe-4S] cluster is bound by residues cysteine 49, cysteine 52, cysteine 57, cysteine 73, cysteine 115, cysteine 118, cysteine 121, cysteine 125, cysteine 145, cysteine 148, cysteine 151, and cysteine 155. 4Fe-4S ferredoxin-type domains lie at 106-135 (RVAF…GAPK) and 136-165 (LMHT…MIEL).

It belongs to the 4Fe4S bacterial-type ferredoxin family. RnfB subfamily. In terms of assembly, the complex is composed of six subunits: RnfA, RnfB, RnfC, RnfD, RnfE and RnfG. [4Fe-4S] cluster serves as cofactor.

Its subcellular location is the cell inner membrane. Functionally, part of a membrane-bound complex that couples electron transfer with translocation of ions across the membrane. The sequence is that of Ion-translocating oxidoreductase complex subunit B from Tolumonas auensis (strain DSM 9187 / NBRC 110442 / TA 4).